Reading from the N-terminus, the 263-residue chain is Hydroxyethylthiazole kinase (263 aa).

Methionine 45 contacts substrate. ATP-binding residues include arginine 121 and serine 167. Glycine 194 is a binding site for substrate.

It belongs to the Thz kinase family. Mg(2+) serves as cofactor.

It catalyses the reaction 5-(2-hydroxyethyl)-4-methylthiazole + ATP = 4-methyl-5-(2-phosphooxyethyl)-thiazole + ADP + H(+). The protein operates within cofactor biosynthesis; thiamine diphosphate biosynthesis; 4-methyl-5-(2-phosphoethyl)-thiazole from 5-(2-hydroxyethyl)-4-methylthiazole: step 1/1. In terms of biological role, catalyzes the phosphorylation of the hydroxyl group of 4-methyl-5-beta-hydroxyethylthiazole (THZ). This is Hydroxyethylthiazole kinase from Vibrio parahaemolyticus serotype O3:K6 (strain RIMD 2210633).